Consider the following 220-residue polypeptide: Octanoyltransferase (220 aa).

The BPL/LPL catalytic domain occupies 31-217 (ENTPDEIWLV…HFAEILGYNA (187 aa)). Substrate is bound by residues 70 to 77 (RGGQITYH), 146 to 148 (SLG), and 159 to 161 (GLA). Cys-177 acts as the Acyl-thioester intermediate in catalysis.

This sequence belongs to the LipB family.

The protein localises to the cytoplasm. The enzyme catalyses octanoyl-[ACP] + L-lysyl-[protein] = N(6)-octanoyl-L-lysyl-[protein] + holo-[ACP] + H(+). The protein operates within protein modification; protein lipoylation via endogenous pathway; protein N(6)-(lipoyl)lysine from octanoyl-[acyl-carrier-protein]: step 1/2. Catalyzes the transfer of endogenously produced octanoic acid from octanoyl-acyl-carrier-protein onto the lipoyl domains of lipoate-dependent enzymes. Lipoyl-ACP can also act as a substrate although octanoyl-ACP is likely to be the physiological substrate. This chain is Octanoyltransferase, found in Actinobacillus succinogenes (strain ATCC 55618 / DSM 22257 / CCUG 43843 / 130Z).